A 245-amino-acid polypeptide reads, in one-letter code: Terpene cyclase ausL (245 aa).

Helical transmembrane passes span 17 to 37, 51 to 71, 76 to 96, 113 to 133, 138 to 158, 170 to 190, and 206 to 226; these read ILAI…VNYI, IGIL…WMFP, HWQG…LVTL, IVFI…ALAA, ALGF…GGIA, SYLI…KLCI, and MCWF…FLYF.

This sequence belongs to the paxB family.

It localises to the membrane. The protein operates within secondary metabolite biosynthesis; terpenoid biosynthesis. Its function is as follows. Terpene cyclase; part of the gene cluster A that mediates the biosynthesis of the fungal meroterpenoid acetoxydehydroaustin. The first step of the pathway is the synthesis of 3,5-dimethylorsellinic acid by the polyketide synthase ausA. 3,5-dimethylorsellinic acid is then prenylated by the polyprenyl transferase ausN. Further epoxidation by the FAD-dependent monooxygenase ausM and cyclization by the probable terpene cyclase ausL lead to the formation of protoaustinoid A. Protoaustinoid A is then oxidized to spiro-lactone preaustinoid A3 by the combined action of the FAD-binding monooxygenases ausB and ausC, and the dioxygenase ausE. Acid-catalyzed keto-rearrangement and ring contraction of the tetraketide portion of preaustinoid A3 by ausJ lead to the formation of preaustinoid A4. The aldo-keto reductase ausK, with the help of ausH, is involved in the next step by transforming preaustinoid A4 into isoaustinone which is in turn hydroxylated by the P450 monooxygenase ausI to form austinolide. The cytochrome P450 monooxygenase ausG then modifies austinolide to austinol. Austinol is further acetylated to austin by the O-acetyltransferase ausP, which spontaneously changes to dehydroaustin. The cytochrome P450 monooxygenase then converts dehydroaustin is into 7-dehydrodehydroaustin. The hydroxylation catalyzed by ausR permits the second O-acetyltransferase ausQ to add an additional acetyl group to the molecule, leading to the formation of acetoxydehydroaustin. Due to genetic rearrangements of the clusters and the subsequent loss of some enzymes, the end product of the Penicillium brasilianum austinoid biosynthesis clusters is acetoxydehydroaustin. The protein is Terpene cyclase ausL of Penicillium brasilianum.